The chain runs to 223 residues: Serine/threonine/tyrosine-interacting protein A (223 aa).

Residues 28–176 (EMQEILPGLF…LQEYEAIYLA (149 aa)) form the Tyrosine-protein phosphatase domain.

Belongs to the protein-tyrosine phosphatase family. Non-receptor class subfamily.

Its function is as follows. Catalytically inactive phosphatase. This chain is Serine/threonine/tyrosine-interacting protein A (styx-a), found in Xenopus laevis (African clawed frog).